Consider the following 141-residue polypeptide: Galactose-6-phosphate isomerase subunit LacA (141 aa).

Belongs to the LacAB/RpiB family. Heteromultimeric protein consisting of LacA and LacB.

The catalysed reaction is aldehydo-D-galactose 6-phosphate = keto-D-tagatose 6-phosphate. The protein operates within carbohydrate metabolism; D-galactose 6-phosphate degradation; D-tagatose 6-phosphate from D-galactose 6-phosphate: step 1/1. The polypeptide is Galactose-6-phosphate isomerase subunit LacA (Streptococcus pneumoniae serotype 4 (strain ATCC BAA-334 / TIGR4)).